The following is a 333-amino-acid chain: Phosphate acyltransferase (333 aa).

This sequence belongs to the PlsX family. In terms of assembly, homodimer. Probably interacts with PlsY.

The protein localises to the cytoplasm. It catalyses the reaction a fatty acyl-[ACP] + phosphate = an acyl phosphate + holo-[ACP]. The protein operates within lipid metabolism; phospholipid metabolism. Its function is as follows. Catalyzes the reversible formation of acyl-phosphate (acyl-PO(4)) from acyl-[acyl-carrier-protein] (acyl-ACP). This enzyme utilizes acyl-ACP as fatty acyl donor, but not acyl-CoA. The chain is Phosphate acyltransferase from Desulforamulus reducens (strain ATCC BAA-1160 / DSM 100696 / MI-1) (Desulfotomaculum reducens).